The sequence spans 304 residues: Tyrosine recombinase XerC (304 aa).

The Core-binding (CB) domain maps to 2–88; that stretch reads ANVKNFLTLF…ALRSFYKFLL (87 aa). The Tyr recombinase domain maps to 109 to 294; sequence RIPKFLYEKE…SKDMLRKTYM (186 aa). Catalysis depends on residues arginine 149, lysine 173, histidine 246, arginine 249, and histidine 272. Tyrosine 281 (O-(3'-phospho-DNA)-tyrosine intermediate) is an active-site residue.

Belongs to the 'phage' integrase family. XerC subfamily. As to quaternary structure, forms a cyclic heterotetrameric complex composed of two molecules of XerC and two molecules of XerD.

It localises to the cytoplasm. Its function is as follows. Site-specific tyrosine recombinase, which acts by catalyzing the cutting and rejoining of the recombining DNA molecules. The XerC-XerD complex is essential to convert dimers of the bacterial chromosome into monomers to permit their segregation at cell division. It also contributes to the segregational stability of plasmids. This chain is Tyrosine recombinase XerC, found in Bacillus licheniformis (strain ATCC 14580 / DSM 13 / JCM 2505 / CCUG 7422 / NBRC 12200 / NCIMB 9375 / NCTC 10341 / NRRL NRS-1264 / Gibson 46).